Consider the following 158-residue polypeptide: ATP synthase subunit b', chloroplastic (158 aa).

The chain crosses the membrane as a helical span at residues 21–41; it reads GTLPLMALQFLILMLLLNTIF.

It belongs to the ATPase B chain family. F-type ATPases have 2 components, F(1) - the catalytic core - and F(0) - the membrane proton channel. F(1) has five subunits: alpha(3), beta(3), gamma(1), delta(1), epsilon(1). F(0) has four main subunits: a(1), b(1), b'(1) and c(10-14). The alpha and beta chains form an alternating ring which encloses part of the gamma chain. F(1) is attached to F(0) by a central stalk formed by the gamma and epsilon chains, while a peripheral stalk is formed by the delta, b and b' chains.

Its subcellular location is the plastid. It is found in the chloroplast thylakoid membrane. F(1)F(0) ATP synthase produces ATP from ADP in the presence of a proton or sodium gradient. F-type ATPases consist of two structural domains, F(1) containing the extramembraneous catalytic core and F(0) containing the membrane proton channel, linked together by a central stalk and a peripheral stalk. During catalysis, ATP synthesis in the catalytic domain of F(1) is coupled via a rotary mechanism of the central stalk subunits to proton translocation. Its function is as follows. Component of the F(0) channel, it forms part of the peripheral stalk, linking F(1) to F(0). The b'-subunit is a diverged and duplicated form of b found in plants and photosynthetic bacteria. The protein is ATP synthase subunit b', chloroplastic of Porphyra purpurea (Red seaweed).